Reading from the N-terminus, the 167-residue chain is SsrA-binding protein (167 aa).

This sequence belongs to the SmpB family.

It is found in the cytoplasm. Functionally, required for rescue of stalled ribosomes mediated by trans-translation. Binds to transfer-messenger RNA (tmRNA), required for stable association of tmRNA with ribosomes. tmRNA and SmpB together mimic tRNA shape, replacing the anticodon stem-loop with SmpB. tmRNA is encoded by the ssrA gene; the 2 termini fold to resemble tRNA(Ala) and it encodes a 'tag peptide', a short internal open reading frame. During trans-translation Ala-aminoacylated tmRNA acts like a tRNA, entering the A-site of stalled ribosomes, displacing the stalled mRNA. The ribosome then switches to translate the ORF on the tmRNA; the nascent peptide is terminated with the 'tag peptide' encoded by the tmRNA and targeted for degradation. The ribosome is freed to recommence translation, which seems to be the essential function of trans-translation. This chain is SsrA-binding protein, found in Stenotrophomonas maltophilia (strain K279a).